We begin with the raw amino-acid sequence, 364 residues long: 3-isopropylmalate dehydrogenase (364 aa).

NAD(+) is bound at residue 79–92 (GPKWNNINETSRPE). 4 residues coordinate substrate: arginine 100, arginine 110, arginine 139, and aspartate 228. Mg(2+)-binding residues include aspartate 228, aspartate 252, and aspartate 256. NAD(+) is bound at residue 286 to 298 (GSAPDIAGKNIAN).

It belongs to the isocitrate and isopropylmalate dehydrogenases family. LeuB type 1 subfamily. As to quaternary structure, homodimer. Requires Mg(2+) as cofactor. Mn(2+) serves as cofactor.

It localises to the cytoplasm. The enzyme catalyses (2R,3S)-3-isopropylmalate + NAD(+) = 4-methyl-2-oxopentanoate + CO2 + NADH. It functions in the pathway amino-acid biosynthesis; L-leucine biosynthesis; L-leucine from 3-methyl-2-oxobutanoate: step 3/4. Its function is as follows. Catalyzes the oxidation of 3-carboxy-2-hydroxy-4-methylpentanoate (3-isopropylmalate) to 3-carboxy-4-methyl-2-oxopentanoate. The product decarboxylates to 4-methyl-2 oxopentanoate. This chain is 3-isopropylmalate dehydrogenase, found in Blochmanniella floridana.